The following is a 186-amino-acid chain: Peptidyl-tRNA hydrolase (186 aa).

H19 serves as the catalytic Proton acceptor. The tRNA site is built by F64, N66, and N112.

This sequence belongs to the PTH family. Monomer.

Its subcellular location is the cytoplasm. It catalyses the reaction an N-acyl-L-alpha-aminoacyl-tRNA + H2O = an N-acyl-L-amino acid + a tRNA + H(+). Functionally, hydrolyzes ribosome-free peptidyl-tRNAs (with 1 or more amino acids incorporated), which drop off the ribosome during protein synthesis, or as a result of ribosome stalling. Catalyzes the release of premature peptidyl moieties from peptidyl-tRNA molecules trapped in stalled 50S ribosomal subunits, and thus maintains levels of free tRNAs and 50S ribosomes. The chain is Peptidyl-tRNA hydrolase from Pelagibacter ubique (strain HTCC1062).